A 302-amino-acid polypeptide reads, in one-letter code: Protoheme IX farnesyltransferase (302 aa).

9 helical membrane passes run Val-26–Val-46, Trp-48–Leu-68, Val-98–Asn-118, Leu-120–Leu-140, Ile-148–Gly-168, Ala-174–Val-194, Ile-221–Gly-241, Leu-244–Leu-264, and Ile-280–Leu-300.

The protein belongs to the UbiA prenyltransferase family. Protoheme IX farnesyltransferase subfamily.

It localises to the cell inner membrane. It catalyses the reaction heme b + (2E,6E)-farnesyl diphosphate + H2O = Fe(II)-heme o + diphosphate. The protein operates within porphyrin-containing compound metabolism; heme O biosynthesis; heme O from protoheme: step 1/1. Its function is as follows. Converts heme B (protoheme IX) to heme O by substitution of the vinyl group on carbon 2 of heme B porphyrin ring with a hydroxyethyl farnesyl side group. This Alkalilimnicola ehrlichii (strain ATCC BAA-1101 / DSM 17681 / MLHE-1) protein is Protoheme IX farnesyltransferase.